Here is a 186-residue protein sequence, read N- to C-terminus: Lipid A palmitoyltransferase PagP (186 aa).

The signal sequence occupies residues 1 to 25 (MNVSKYVAIFSFVFIQLISVGKVFA). Catalysis depends on residues histidine 58, aspartate 101, and serine 102.

It belongs to the lipid A palmitoyltransferase family. As to quaternary structure, homodimer.

The protein resides in the cell outer membrane. The enzyme catalyses lipid A (E. coli) + a 1-hexadecanoyl-2-acyl-sn-glycero-3-phosphocholine = hepta-acyl lipid A (E. coli) + a 2-acyl-sn-glycero-3-phosphocholine. The catalysed reaction is lipid IIA + a 1-hexadecanoyl-2-acyl-sn-glycero-3-phosphocholine = lipid IIB + a 2-acyl-sn-glycero-3-phosphocholine. It catalyses the reaction lipid IVA (E. coli) + a 1-hexadecanoyl-2-acyl-sn-glycero-3-phosphocholine = lipid IVB (E. coli) + a 2-acyl-sn-glycero-3-phosphocholine. With respect to regulation, inhibited by lauryldimethylamine oxide (LDAO) and dodecylphosphocholine (DPC). Functionally, transfers a palmitate residue from the sn-1 position of a phospholipid to the N-linked hydroxymyristate on the proximal unit of lipid A or its precursors. Phosphatidylglycerol (PtdGro), phosphatidylethanolamine (PtdEtn), phosphatidylserine (PtdSer) and phosphatidic acid (Ptd-OH) are all effective acyl donors. The polypeptide is Lipid A palmitoyltransferase PagP (Escherichia coli (strain K12)).